Consider the following 147-residue polypeptide: Large ribosomal subunit protein uL13 (147 aa).

Belongs to the universal ribosomal protein uL13 family. As to quaternary structure, part of the 50S ribosomal subunit.

Functionally, this protein is one of the early assembly proteins of the 50S ribosomal subunit, although it is not seen to bind rRNA by itself. It is important during the early stages of 50S assembly. The chain is Large ribosomal subunit protein uL13 from Mycolicibacterium smegmatis (strain ATCC 700084 / mc(2)155) (Mycobacterium smegmatis).